The sequence spans 253 residues: Hydroxyacylglutathione hydrolase (253 aa).

7 residues coordinate Zn(2+): histidine 54, histidine 56, aspartate 58, histidine 59, histidine 110, aspartate 127, and histidine 165.

The protein belongs to the metallo-beta-lactamase superfamily. Glyoxalase II family. In terms of assembly, monomer. Zn(2+) serves as cofactor.

The enzyme catalyses an S-(2-hydroxyacyl)glutathione + H2O = a 2-hydroxy carboxylate + glutathione + H(+). It participates in secondary metabolite metabolism; methylglyoxal degradation; (R)-lactate from methylglyoxal: step 2/2. In terms of biological role, thiolesterase that catalyzes the hydrolysis of S-D-lactoyl-glutathione to form glutathione and D-lactic acid. This Idiomarina loihiensis (strain ATCC BAA-735 / DSM 15497 / L2-TR) protein is Hydroxyacylglutathione hydrolase.